The primary structure comprises 298 residues: Transcription factor bHLH114 (298 aa).

Residues 117–149 adopt a coiled-coil conformation; that stretch reads LDHEIRNHKSSKEQITQDYKNLTSKRSEELEEN. A disordered region spans residues 126-154; that stretch reads SSKEQITQDYKNLTSKRSEELEENSDEYS. Residues 129 to 140 are compositionally biased toward polar residues; that stretch reads EQITQDYKNLTS. A bHLH domain is found at 163–212; it reads LETLSPLPSFKVRKEKLGDRITALQQLVSPFGKTDTASVLNEAVEYIKFL.

Homodimer. Differentiating root endodermis.

The protein localises to the nucleus. This chain is Transcription factor bHLH114 (BHLH114), found in Arabidopsis thaliana (Mouse-ear cress).